Here is a 202-residue protein sequence, read N- to C-terminus: ATP-dependent Clp protease proteolytic subunit (202 aa).

Ser101 acts as the Nucleophile in catalysis. His126 is a catalytic residue.

This sequence belongs to the peptidase S14 family. Component of the chloroplastic Clp protease core complex.

Its subcellular location is the plastid. The protein resides in the chloroplast stroma. The catalysed reaction is Hydrolysis of proteins to small peptides in the presence of ATP and magnesium. alpha-casein is the usual test substrate. In the absence of ATP, only oligopeptides shorter than five residues are hydrolyzed (such as succinyl-Leu-Tyr-|-NHMec, and Leu-Tyr-Leu-|-Tyr-Trp, in which cleavage of the -Tyr-|-Leu- and -Tyr-|-Trp bonds also occurs).. In terms of biological role, cleaves peptides in various proteins in a process that requires ATP hydrolysis. Has a chymotrypsin-like activity. Plays a major role in the degradation of misfolded proteins. The sequence is that of ATP-dependent Clp protease proteolytic subunit from Acorus calamus (Sweet flag).